Here is a 173-residue protein sequence, read N- to C-terminus: Shikimate kinase 1 (173 aa).

Residue 14–19 (GAGKST) participates in ATP binding. Ser-18 contributes to the Mg(2+) binding site. Asp-36, Arg-60, and Gly-82 together coordinate substrate. Arg-120 serves as a coordination point for ATP. Arg-140 is a substrate binding site.

It belongs to the shikimate kinase family. Monomer. Mg(2+) serves as cofactor.

Its subcellular location is the cytoplasm. The catalysed reaction is shikimate + ATP = 3-phosphoshikimate + ADP + H(+). It participates in metabolic intermediate biosynthesis; chorismate biosynthesis; chorismate from D-erythrose 4-phosphate and phosphoenolpyruvate: step 5/7. Catalyzes the specific phosphorylation of the 3-hydroxyl group of shikimic acid using ATP as a cosubstrate. The sequence is that of Shikimate kinase 1 from Hamiltonella defensa subsp. Acyrthosiphon pisum (strain 5AT).